The sequence spans 533 residues: Berberine bridge enzyme-like 12 (533 aa).

Positions 1–20 are cleaved as a signal peptide; that stretch reads MYLIFLLFFAASYSMSLSSA. A disulfide bridge connects residues Cys32 and Cys95. Asn35, Asn70, Asn133, Asn296, Asn412, and Asn417 each carry an N-linked (GlcNAc...) asparagine glycan. The 177-residue stretch at 73-249 folds into the FAD-binding PCMH-type domain; the sequence is SMPKPSIIIV…LAFKVKLVTV (177 aa). Positions 110-174 form a cross-link, 6-(S-cysteinyl)-8alpha-(pros-histidyl)-FAD (His-Cys); it reads HDYDGLSYVS…EVHAFPAGVC (65 aa).

This sequence belongs to the oxygen-dependent FAD-linked oxidoreductase family. The cofactor is FAD. In terms of processing, the FAD cofactor is bound via a bicovalent 6-S-cysteinyl, 8alpha-N1-histidyl FAD linkage.

The protein resides in the secreted. It is found in the cell wall. This Arabidopsis thaliana (Mouse-ear cress) protein is Berberine bridge enzyme-like 12.